An 857-amino-acid polypeptide reads, in one-letter code: Leucine--tRNA ligase (857 aa).

A 'HIGH' region motif is present at residues 42 to 52 (PYPSGTLHMGH). The 'KMSKS' region motif lies at 616–620 (KMSKS). Position 619 (Lys-619) interacts with ATP.

This sequence belongs to the class-I aminoacyl-tRNA synthetase family.

It localises to the cytoplasm. The catalysed reaction is tRNA(Leu) + L-leucine + ATP = L-leucyl-tRNA(Leu) + AMP + diphosphate. The sequence is that of Leucine--tRNA ligase from Parasynechococcus marenigrum (strain WH8102).